Here is a 129-residue protein sequence, read N- to C-terminus: Profilin-4 (129 aa).

This sequence belongs to the profilin family. As to expression, expressed in testis, in germ cells in seminiferous tubules (at protein level).

The protein resides in the cytoplasm. Involved in male fertility. Required for manchette development and acrosome biogenesis during spermiogenesis. Binds in vitro to phospholipids, including phosphatidylinositol 3-phosphate (PtdIns(3)P), phosphatidylinositol 4,5-bisphosphate (PtdIns(4,5)P2), phosphatidylinositol 4-phosphate (PtdIns(4)P) and phosphatidic acid (PA). Contrary to other profilin family members, does not bind to actin in vitro. This chain is Profilin-4 (Pfn4), found in Mus musculus (Mouse).